The sequence spans 1085 residues: DNA repair and recombination protein RAD26 (1085 aa).

S30 is subject to Phosphoserine. 2 disordered regions span residues 118-141 (KEQV…GETE) and 190-219 (NLTD…EEND). Positions 128 to 141 (KGSKEGLQRPGETE) are enriched in basic and acidic residues. Residues 210–219 (SEDDEEEEND) are compositionally biased toward acidic residues. The Helicase ATP-binding domain maps to 309 to 518 (YELYQQNCGG…WSLFDFIFPG (210 aa)). ATP is bound at residue 322–329 (DEMGLGKT). Positions 469-472 (DEGH) match the DEGH box motif. The Helicase C-terminal domain occupies 655–818 (VVKQLLLLWH…KRFFKIHELH (164 aa)).

This sequence belongs to the SNF2/RAD54 helicase family.

The protein localises to the nucleus. The enzyme catalyses ATP + H2O = ADP + phosphate + H(+). Its function is as follows. May be involved in the preferential repair of active genes. In Saccharomyces cerevisiae (strain ATCC 204508 / S288c) (Baker's yeast), this protein is DNA repair and recombination protein RAD26 (RAD26).